A 136-amino-acid chain; its full sequence is Large ribosomal subunit protein uL16 (136 aa).

The protein belongs to the universal ribosomal protein uL16 family. As to quaternary structure, part of the 50S ribosomal subunit.

Functionally, binds 23S rRNA and is also seen to make contacts with the A and possibly P site tRNAs. The polypeptide is Large ribosomal subunit protein uL16 (Karelsulcia muelleri (strain GWSS) (Sulcia muelleri)).